The primary structure comprises 140 residues: Nucleoside diphosphate kinase (140 aa).

Residues K11, F59, R87, T93, R104, and N114 each coordinate ATP. H117 acts as the Pros-phosphohistidine intermediate in catalysis.

The protein belongs to the NDK family. In terms of assembly, homotetramer. Mg(2+) is required as a cofactor.

It localises to the cytoplasm. The enzyme catalyses a 2'-deoxyribonucleoside 5'-diphosphate + ATP = a 2'-deoxyribonucleoside 5'-triphosphate + ADP. The catalysed reaction is a ribonucleoside 5'-diphosphate + ATP = a ribonucleoside 5'-triphosphate + ADP. Major role in the synthesis of nucleoside triphosphates other than ATP. The ATP gamma phosphate is transferred to the NDP beta phosphate via a ping-pong mechanism, using a phosphorylated active-site intermediate. The chain is Nucleoside diphosphate kinase from Dinoroseobacter shibae (strain DSM 16493 / NCIMB 14021 / DFL 12).